The following is a 212-amino-acid chain: Peptide methionine sulfoxide reductase MsrA (212 aa).

Cys-52 is a catalytic residue.

It belongs to the MsrA Met sulfoxide reductase family.

The catalysed reaction is L-methionyl-[protein] + [thioredoxin]-disulfide + H2O = L-methionyl-(S)-S-oxide-[protein] + [thioredoxin]-dithiol. It carries out the reaction [thioredoxin]-disulfide + L-methionine + H2O = L-methionine (S)-S-oxide + [thioredoxin]-dithiol. Its function is as follows. Has an important function as a repair enzyme for proteins that have been inactivated by oxidation. Catalyzes the reversible oxidation-reduction of methionine sulfoxide in proteins to methionine. The polypeptide is Peptide methionine sulfoxide reductase MsrA (Escherichia coli O6:K15:H31 (strain 536 / UPEC)).